The chain runs to 199 residues: Ribosome biogenesis protein RLP24 (199 aa).

The segment at 147-182 (KEQERAESVSEQEESEEEEEDMEIDSDEEEEEQLEK) is disordered. Acidic residues predominate over residues 156 to 179 (SEQEESEEEEEDMEIDSDEEEEEQ). At Ser-172 the chain carries Phosphoserine.

It belongs to the eukaryotic ribosomal protein eL24 family. Associated with nucleolar and cytoplasmic pre-60S particles. At the end of biogenesis it dissociates from cytoplasmic pre-60S particles and is likely to be exchanged for its ribosomal homolog, RPL24. Interacts (via C-terminus) with AFG2 (hexameric form); the interaction is direct, recruits AFG2 to pre-60S ribosomal particles and promotes AFG2 ATPase activity and RLP24 release from pre-60S ribosomal particles. Interacts with NOG1; the interaction is direct.

It localises to the cytoplasm. The protein resides in the nucleus. In terms of biological role, involved in the biogenesis of the 60S ribosomal subunit. Ensures the docking of NOG1 to pre-60S ribosomal particles. Activates and recruits ATPase AFG2 to cytoplasmic pre-60S ribosomal particles. The sequence is that of Ribosome biogenesis protein RLP24 (RLP24) from Saccharomyces cerevisiae (strain ATCC 204508 / S288c) (Baker's yeast).